Reading from the N-terminus, the 116-residue chain is Endoribonuclease EndoA (116 aa).

The protein belongs to the PemK/MazF family. Homodimer. Forms a complex with antitoxin EndoAI in which the toxin activity is inhibited. One dimer binds a ssRNA substrate, forms a heterohexamer composed of alternating toxin and antitoxin homodimers which inhibits the endoribonuclease activity. Antitoxin prevents RNA binding to the endoribonuclease.

Toxic component of a type II toxin-antitoxin (TA) system. Specific for 5'-UACAU-3' sequences, cleaving after the first U. Yields cleavage products with 3' phosphate and 5' hydroxyl groups. Cannot digest substrate with a UUdUACAUAA cleavage site. Overexpression is toxic for cell growth (shown in E.coli), probably by inhibiting protein synthesis through the cleavage of single-stranded RNA. The toxicity is reversed by the antitoxin EndoAI. Toxin activity cannot be inhibited by MazE from E.coli. The EndoA-EndoAI complex does not seem to bind its own promoter. In Bacillus subtilis (strain 168), this protein is Endoribonuclease EndoA.